A 319-amino-acid chain; its full sequence is Cytochrome c biogenesis protein CcsA (319 aa).

8 helical membrane-spanning segments follow: residues 9-29, 48-68, 71-91, 98-118, 143-163, 225-245, 258-275, and 286-306; these read ILTHISFSIISIVITIFLISL, TFFCITGLLVTRWIYSGHFPL, LYESLIFLSWSFSVIHMVPYF, LSTITAPSTIFTQGFATSGLL, MILGYAALLCGSLLSVALLVI, IISLGFLFLTIGILSGAVWAN, ETWAFITWTLFAIYLHTR, and AIVASIGFLIIWICYFGVNLL.

It belongs to the CcmF/CycK/Ccl1/NrfE/CcsA family. In terms of assembly, may interact with Ccs1.

It localises to the plastid. The protein resides in the chloroplast thylakoid membrane. Required during biogenesis of c-type cytochromes (cytochrome c6 and cytochrome f) at the step of heme attachment. This Eucalyptus globulus subsp. globulus (Tasmanian blue gum) protein is Cytochrome c biogenesis protein CcsA.